A 100-amino-acid polypeptide reads, in one-letter code: Urease subunit gamma (100 aa).

The protein belongs to the urease gamma subunit family. Heterotrimer of UreA (gamma), UreB (beta) and UreC (alpha) subunits. Three heterotrimers associate to form the active enzyme.

The protein localises to the cytoplasm. The catalysed reaction is urea + 2 H2O + H(+) = hydrogencarbonate + 2 NH4(+). It participates in nitrogen metabolism; urea degradation; CO(2) and NH(3) from urea (urease route): step 1/1. In Rhizobium leguminosarum bv. viciae, this protein is Urease subunit gamma.